The following is a 955-amino-acid chain: E3 ubiquitin-protein ligase MIB2 (955 aa).

The residue at position 1 (Met-1) is an N-acetylmethionine. In terms of domain architecture, MIB/HERC2 1 spans 1–80 (MDPDPQAGVQ…AHDLLLYDNA (80 aa)). The ZZ-type zinc-finger motif lies at 86-138 (HPNIICDCCKKHGLRGMRWKCRVCLDYDLCTQCYMHNKHELAHAFDRYETAHS). Positions 91, 94, 106, 109, 115, 118, 124, and 128 each coordinate Zn(2+). Positions 149 to 227 (LPRIPLRGIF…KVDLKCVGEA (79 aa)) constitute an MIB/HERC2 2 domain. Residue Ser-251 is modified to Phosphoserine. ANK repeat units lie at residues 464–493 (QGRTALQVAAYLGQVELIRLLLQARAGVDL), 497–526 (EGNTALHYAALGNQPEATRVLLSAGCRADA), 530–559 (TQSTALHVAVQRGFLEVVRALCERGCDVNL), 563–595 (HSDTPLHSAISAGTGASGIVEVLTEVPNIDVTA), 599–628 (QGFTLLHHASLKGHALAVRKILARARQLVD), 633–663 (DGFTALHLAALNNHREVAQILIREGRCDVNV), 667–696 (KLQSPLHLAVQQAHVGLVPLLVDAGCSVNA), 700–728 (EGDTALHVALQRHQLLPLVADGAGGDPGP), and 769–798 (RGRSPLDLAAEGRVLKALQGCAQRFRERQA). 2 consecutive RING-type zinc fingers follow at residues 832–867 (CLVCSELALLVLFSPCQHRTVCEECARRMKKCIRCQ) and 911–944 (CPICIDSHIRLVFQCGHGACAPCGSALSACPICR).

Interacts with actin monomer. Ubiquitinated. Possibly via autoubiquitination. Expressed in skeletal muscle, and to a lesser extent in heart, brain and kidney.

It localises to the cytoplasm. Its subcellular location is the endosome. It catalyses the reaction S-ubiquitinyl-[E2 ubiquitin-conjugating enzyme]-L-cysteine + [acceptor protein]-L-lysine = [E2 ubiquitin-conjugating enzyme]-L-cysteine + N(6)-ubiquitinyl-[acceptor protein]-L-lysine.. It participates in protein modification; protein ubiquitination. Functionally, E3 ubiquitin-protein ligase that mediates ubiquitination of Delta receptors, which act as ligands of Notch proteins. Positively regulates the Delta-mediated Notch signaling by ubiquitinating the intracellular domain of Delta, leading to endocytosis of Delta receptors. The protein is E3 ubiquitin-protein ligase MIB2 of Homo sapiens (Human).